An 81-amino-acid chain; its full sequence is Apolipoprotein C-I, acidic form (81 aa).

Positions 1–24 (MRLFLSLLVVVLSMVLKGPTPAQG) are cleaved as a signal peptide.

This sequence belongs to the apolipoprotein C1 family.

The protein resides in the secreted. The chain is Apolipoprotein C-I, acidic form (APOC1A) from Macaca fascicularis (Crab-eating macaque).